The sequence spans 126 residues: Large ribosomal subunit protein uL22 (126 aa).

This sequence belongs to the universal ribosomal protein uL22 family. Part of the 50S ribosomal subunit.

Its function is as follows. This protein binds specifically to 23S rRNA; its binding is stimulated by other ribosomal proteins, e.g. L4, L17, and L20. It is important during the early stages of 50S assembly. It makes multiple contacts with different domains of the 23S rRNA in the assembled 50S subunit and ribosome. The globular domain of the protein is located near the polypeptide exit tunnel on the outside of the subunit, while an extended beta-hairpin is found that lines the wall of the exit tunnel in the center of the 70S ribosome. The chain is Large ribosomal subunit protein uL22 from Bradyrhizobium sp. (strain BTAi1 / ATCC BAA-1182).